We begin with the raw amino-acid sequence, 139 residues long: D-ribose pyranase (139 aa).

The active-site Proton donor is His-20. Substrate contacts are provided by residues Asp-28, His-106, and 128 to 130 (YAN).

The protein belongs to the RbsD / FucU family. RbsD subfamily. As to quaternary structure, homodecamer.

The protein resides in the cytoplasm. The catalysed reaction is beta-D-ribopyranose = beta-D-ribofuranose. The protein operates within carbohydrate metabolism; D-ribose degradation; D-ribose 5-phosphate from beta-D-ribopyranose: step 1/2. Catalyzes the interconversion of beta-pyran and beta-furan forms of D-ribose. The protein is D-ribose pyranase of Proteus mirabilis (strain HI4320).